The chain runs to 432 residues: Probable M18 family aminopeptidase 2 (432 aa).

Residues His-86, His-157, and His-408 each contribute to the Zn(2+) site.

It belongs to the peptidase M18 family. Requires Zn(2+) as cofactor.

The protein is Probable M18 family aminopeptidase 2 (apeB) of Streptomyces coelicolor (strain ATCC BAA-471 / A3(2) / M145).